The sequence spans 154 residues: SsrA-binding protein (154 aa).

This sequence belongs to the SmpB family.

The protein resides in the cytoplasm. Required for rescue of stalled ribosomes mediated by trans-translation. Binds to transfer-messenger RNA (tmRNA), required for stable association of tmRNA with ribosomes. tmRNA and SmpB together mimic tRNA shape, replacing the anticodon stem-loop with SmpB. tmRNA is encoded by the ssrA gene; the 2 termini fold to resemble tRNA(Ala) and it encodes a 'tag peptide', a short internal open reading frame. During trans-translation Ala-aminoacylated tmRNA acts like a tRNA, entering the A-site of stalled ribosomes, displacing the stalled mRNA. The ribosome then switches to translate the ORF on the tmRNA; the nascent peptide is terminated with the 'tag peptide' encoded by the tmRNA and targeted for degradation. The ribosome is freed to recommence translation, which seems to be the essential function of trans-translation. The protein is SsrA-binding protein of Synechocystis sp. (strain ATCC 27184 / PCC 6803 / Kazusa).